We begin with the raw amino-acid sequence, 209 residues long: Small ribosomal subunit protein uS3 (209 aa).

The KH type-2 domain occupies 38–107 (IRNFIKKNYN…KFGIDIIELK (70 aa)).

Belongs to the universal ribosomal protein uS3 family. As to quaternary structure, part of the 30S ribosomal subunit. Forms a tight complex with proteins S10 and S14.

Binds the lower part of the 30S subunit head. Binds mRNA in the 70S ribosome, positioning it for translation. In Fervidobacterium nodosum (strain ATCC 35602 / DSM 5306 / Rt17-B1), this protein is Small ribosomal subunit protein uS3.